The sequence spans 883 residues: MPSLNDIRSTFLDYFRRNGHRVVESSPLVPRNDPTLMFTNSGMVQFKNCFTGLEHRDYTRATTAQKCVRAGGKHNDLDNVGYTARHHTFFEMLGNFSFGDYFKSDAIPFAWELLTKDFDIPKEKLLVTVYHTDHEAAEIWKKVAGLPDERIIRIPTNDNFWMMGPTGPCGPCTEIFFDHGPSIWGGPPGSADEDGDRFIEIWNLVFMQNEQHPDGSMTPLPKQSIDTGMGLERIGALLQGKHDNYDTDLMRSLIEASAHATSTDPDGPGKTHHRVIADHLRSTSFLIADGVMPSNEGRGYVLRRIMRRAMRHAHLLGAQDPVMHRLVPALVRQMGAAYPELTRGQALIEETLKLEETRFRQTLERGLRLLEDELGHLPEGSPLPGEAAFKLYDTYGFPLDLTQDALREKGRKVDVEGFEAAMAEQKAKARASWSGSGETKDAAIWFDLAETHGATEFLGYDTEQAEGQVLALVAAGAETASVGVGQTVQIILNQTPFYAESGGQVGDTGELRTDTGRARITDVKKGQGLFLHFAEVVEGEIRQGQGATLVVDHARRSAIRANHSATHLLHEALRRALGDHVAQRGSLNAPDRLRFDFSHSRALSPEELAAVEAEVNGFIRSNGAVETRIMSPDDARALGAQALFGEKYGDEVRVVSMGTLAGSGKGTDGQTYSLELCGGTHVSRLGDIGLCVILGDSASSAGVRRIEALTGEGALTYLNEQMKRLTDVAAALKAAPAELVDRVKALVEERRQLQNEVAQLRREAAMGGGAASEAKEIGGVKFLAQVVQGVPGKDMPGLIDEMKARVGSGAVLLISDTGGKAALAAGVTPDLTDRLSAVTLVKAAAEALGGRGGGGRPDMAQAGAADASQADAAIRAAEAVMGG.

4 residues coordinate Zn(2+): histidine 563, histidine 567, cysteine 677, and histidine 681.

Belongs to the class-II aminoacyl-tRNA synthetase family. The cofactor is Zn(2+).

It is found in the cytoplasm. The enzyme catalyses tRNA(Ala) + L-alanine + ATP = L-alanyl-tRNA(Ala) + AMP + diphosphate. Functionally, catalyzes the attachment of alanine to tRNA(Ala) in a two-step reaction: alanine is first activated by ATP to form Ala-AMP and then transferred to the acceptor end of tRNA(Ala). Also edits incorrectly charged Ser-tRNA(Ala) and Gly-tRNA(Ala) via its editing domain. This is Alanine--tRNA ligase from Cereibacter sphaeroides (strain ATCC 17029 / ATH 2.4.9) (Rhodobacter sphaeroides).